The primary structure comprises 317 residues: MKRNHDFSSSDSELDENIEVEKESADENAGANSPLGSMSPSTTSQVQARKRRRGIIEKRRRDRINNSLSELRRLVPSAFEKQGSAKLEKAEILQMTVDHLKMLHAAGGKGYFDAHALAMDYRGLGFRECLAETARYLSIIEGLDNTDPLRIRLVSHLNSYASQREAHSGLGHLAWGSAFGTPPSHLAHHLLLQQQQQQGAPLARSTSSPPSSNSSSPSSSSPSAPSTEPRLSGTVISEAGQTGPLRVPPSTSLPPGLTPPTASKLSPPLLTSLSSLSAFPFPLSAFPLLSPSSLGPATPSSSLGKPYRPWSMEIGAF.

A disordered region spans residues 1 to 59; the sequence is MKRNHDFSSSDSELDENIEVEKESADENAGANSPLGSMSPSTTSQVQARKRRRGIIEKR. A compositionally biased stretch (polar residues) spans 30 to 47; sequence GANSPLGSMSPSTTSQVQ. The region spanning 48–103 is the bHLH domain; it reads ARKRRRGIIEKRRRDRINNSLSELRRLVPSAFEKQGSAKLEKAEILQMTVDHLKML. The Orange domain occupies 121–157; sequence YRGLGFRECLAETARYLSIIEGLDNTDPLRIRLVSHL. 2 stretches are compositionally biased toward low complexity: residues 193–226 and 248–264; these read QQQQQQGAPLARSTSSPPSSNSSSPSSSSPSAPS and PPSTSLPPGLTPPTASK. Residues 193–264 form a disordered region; sequence QQQQQQGAPL…PGLTPPTASK (72 aa). The YRPW motif motif lies at 307–310; the sequence is YRPW.

It belongs to the HEY family.

The protein resides in the nucleus. In terms of biological role, transcriptional repressor which functions as a downstream effector of Notch signaling. This chain is Hairy/enhancer-of-split related with YRPW motif protein 1 (hey1), found in Danio rerio (Zebrafish).